We begin with the raw amino-acid sequence, 661 residues long: Transketolase (661 aa).

His-28 provides a ligand contact to substrate. Residues His-68 and 116–118 (GPL) contribute to the thiamine diphosphate site. Glu-157 is a binding site for Mg(2+). Thiamine diphosphate-binding residues include Gly-158 and Asn-187. Mg(2+)-binding residues include Asn-187 and Ile-189. Residues His-261 and Arg-358 each contribute to the substrate site. His-261 contacts thiamine diphosphate. The Proton donor role is filled by Glu-412. A thiamine diphosphate-binding site is contributed by Phe-438. Residues His-462, Asp-470, and Arg-521 each contribute to the substrate site.

The protein belongs to the transketolase family. In terms of assembly, homodimer. Mg(2+) is required as a cofactor. It depends on Ca(2+) as a cofactor. Requires Mn(2+) as cofactor. Co(2+) serves as cofactor. The cofactor is thiamine diphosphate.

It carries out the reaction D-sedoheptulose 7-phosphate + D-glyceraldehyde 3-phosphate = aldehydo-D-ribose 5-phosphate + D-xylulose 5-phosphate. Its function is as follows. Catalyzes the transfer of a two-carbon ketol group from a ketose donor to an aldose acceptor, via a covalent intermediate with the cofactor thiamine pyrophosphate. The sequence is that of Transketolase (tkt) from Treponema pallidum (strain Nichols).